The sequence spans 707 residues: DCC-interacting protein 13-alpha (707 aa).

The interval 1–428 is required for RAB5A binding; that stretch reads MPGIDKLPIE…PPTARTSSSG (428 aa). Residues 3 to 268 enclose the BAR domain; the sequence is GIDKLPIEET…DPLYLPDPDP (266 aa). Residues 234–257 are a coiled coil; sequence QNVRREMDGDVETMQQTIEDLEVA. The PH domain occupies 277-375; that stretch reads LTRKAGYLNA…WICTINNISK (99 aa). Disordered stretches follow at residues 397–433, 466–490, and 636–707; these read AVTP…LGSE, GQAK…STKS, and EKQK…ESEA. The residue at position 399 (T399) is a Phosphothreonine. Position 401 is a phosphoserine (S401). The short motif at 403 to 414 is the F&amp;H element; the sequence is SFQQRHESLRPG. The residue at position 410 (S410) is a Phosphoserine; by PKA. A PID domain is found at 495–655; it reads SILHQLFIVR…EKQQKELSKQ (161 aa). The stretch at 620 to 670 forms a coiled coil; sequence LAKQIALHAELDRRASEKQKEIERVKEKQQKELSKQKQIEKDLEEQSRLIA. The span at 636–666 shows a compositional bias: basic and acidic residues; that stretch reads EKQKEIERVKEKQQKELSKQKQIEKDLEEQS. Over residues 679-691 the composition is skewed to low complexity; that stretch reads GSEGQLVLSSSQS. S691 and S694 each carry phosphoserine. Residues 698–707 are compositionally biased toward basic and acidic residues; sequence EEGKKRESEA.

In terms of assembly, homodimer. Binds RAB5A/Rab5 through an N-terminal domain. This interaction is essential for its recruitment to endosomal membranes as well as its role in cell proliferation. Binds DCC and the catalytic domain of the inactive form of AKT2 through its PID domain. Binds PIK3CA and subunits of the NuRD/MeCP1 complex. Interacts with OCRL and INPP5B. Interacts with NTRK2. Interacts with APPL2; interaction is independent of follicle stimulating hormone stimulation; interaction is decreased by adiponectin in a time-dependent manner. Forms a complex with APPL2 and RUVBL2. Forms a complex comprising APPL2, RUVBL2, CTNNB1, HDAC1 and HDAC2; interaction reduces interaction between CTNNB1, HDAC1, HDAC2 and RUVBL2 leading to the decrease of deacetylase activity of this complex; affects the recruitment of repressive complexes to the Wnt target genes. Interacts with ANXA2. Interacts with TGFBR1; interaction is TGF beta dependent; mediates trafficking of the TGFBR1 from the endosomes to the nucleus via microtubules in a TRAF6-dependent manner. Interacts with PRKCZ. Interacts with PIK3R1 and APPL2. Interacts with ADIPOR1; ADIPOQ enhances this interaction; inhibites adiponectin-stimulated binding of APPL2 to ADIPOR1. Post-translationally, phosphorylation at Ser-410 by PKA severely impairs binding to OCRL. Expressed in insulin-target tissues including skeletal muscle, liver, fat, and brain.

It is found in the early endosome membrane. The protein resides in the nucleus. The protein localises to the cytoplasm. It localises to the endosome. Its subcellular location is the cell projection. It is found in the ruffle. The protein resides in the cytoplasmic vesicle. The protein localises to the phagosome. Functionally, multifunctional adapter protein that binds to various membrane receptors, nuclear factors and signaling proteins to regulate many processes, such as cell proliferation, immune response, endosomal trafficking and cell metabolism. Regulates signaling pathway leading to cell proliferation through interaction with RAB5A and subunits of the NuRD/MeCP1 complex. Functions as a positive regulator of innate immune response via activation of AKT1 signaling pathway by forming a complex with APPL1 and PIK3R1. Inhibits Fc-gamma receptor-mediated phagocytosis through PI3K/Akt signaling in macrophages. Regulates TLR4 signaling in activated macrophages. Involved in trafficking of the TGFBR1 from the endosomes to the nucleus via microtubules in a TRAF6-dependent manner. Plays a role in cell metabolism by regulating adiponecting and insulin signaling pathways. Required for fibroblast migration through HGF cell signaling. Positive regulator of beta-catenin/TCF-dependent transcription through direct interaction with RUVBL2/reptin resulting in the relief of RUVBL2-mediated repression of beta-catenin/TCF target genes by modulating the interactions within the beta-catenin-reptin-HDAC complex. In Mus musculus (Mouse), this protein is DCC-interacting protein 13-alpha.